The sequence spans 327 residues: CREB homolog crh-1 (327 aa).

The region spanning 16–75 is the KID domain; sequence SPLMMLLFKALQEGGDSEDEARRRREQLNRRPSYRMILKDLETADKVMKKEPEETPPSSV. Disordered regions lie at residues 27-114 and 151-200; these read QEGG…SPYG and KVFP…VQSL. Residues 35–44 show a composition bias toward basic and acidic residues; that stretch reads EARRRREQLN. S48 bears the Phosphoserine mark. Positions 52-68 are enriched in basic and acidic residues; sequence ILKDLETADKVMKKEPE. The segment covering 71–84 has biased composition (polar residues); the sequence is PPSSVDASPLQFQS. The span at 161–172 shows a compositional bias: gly residues; that stretch reads GLGGGGGGGGVP. The span at 173–199 shows a compositional bias: low complexity; the sequence is GPSSGIAGMSVQPPTSSTPSQQQSVQS. A bZIP domain is found at 266–317; the sequence is NRKRQVRLLKNREAAKECRRKKKEYVKCLENRVSVLENQNKALIEELKTLKE. The tract at residues 267-292 is basic motif; the sequence is RKRQVRLLKNREAAKECRRKKKEYVK. Residues 284–318 are a coiled coil; sequence RRKKKEYVKCLENRVSVLENQNKALIEELKTLKEL. The leucine-zipper stretch occupies residues 294–315; that stretch reads LENRVSVLENQNKALIEELKTL.

The protein belongs to the bZIP family. In terms of assembly, interacts with CREB-regulated transcription coactivator homolog crtc-1. Post-translationally, transcriptional activity is enhanced by phosphorylation. Phosphorylated by cmk-1. As to expression, expressed widely, including in head neurons AFD, gustatory neurons ASE, the olfactory neurons AWC, and in the ASI sensory neurons, as well as in the intestine and gonads in hermaphrodites.

It is found in the nucleus. Transcription factor. Transcriptional activity probably positively regulated by phosphorylation. Modulates expression of target genes, acting by binding to regulatory cAMP response elements (CRE). Acts downstream of the calcium-triggered CaMKK-CaMK1 signaling cascade, consisting of the protein kinase kinase ckk-1 and the protein kinase cmk-1. Plays a role in learning and memory, feeding behavior, stress response, entry into the dauer stage and modulation of lifespan. Involved in commitment to the developmentally arrested larval state known as dauer, acting by positively regulating the expression of dauer-inhibiting TGF-beta-like daf-7 in the ASI neurons. Plays a role in both associative and non-associative long-term memory (LTM). Involved in modulating feeding behavior, acting by regulating transcription of tryptophan hydroxylase tph-1 in serotonergic ADF neurons. Regulates transcription of genes involved in endoplasmic reticulum (ER) stress. Involved in modulation of lifespan, in response to raised temperature, but independently of the heat-shock response pathway, acting by regulating transcription of FMRFamide-like neuropeptides flp-6 in the AFD neuron. In terms of biological role, plays a role in associative long-term memory (LTM) and learning. Its function is as follows. Plays a role in associative long-term memory (LTM) and learning; perhaps required at the time of acquisition and/or the consolidation phase of memory formation. In Caenorhabditis elegans, this protein is CREB homolog crh-1.